A 245-amino-acid polypeptide reads, in one-letter code: NADH-quinone oxidoreductase subunit C (245 aa).

Positions 1–10 (MSAPQDRTDD) are enriched in basic and acidic residues. 2 disordered regions span residues 1–54 (MSAP…GYGG) and 216–245 (PQRK…RSYQ). Residues 11–28 (GGVPVPVTPAGATGGAPA) are compositionally biased toward low complexity. Gly residues predominate over residues 39–54 (GMFGDQGTGDVSGYGG).

It belongs to the complex I 30 kDa subunit family. As to quaternary structure, NDH-1 is composed of 14 different subunits. Subunits NuoB, C, D, E, F, and G constitute the peripheral sector of the complex.

The protein localises to the cell membrane. It carries out the reaction a quinone + NADH + 5 H(+)(in) = a quinol + NAD(+) + 4 H(+)(out). Its function is as follows. NDH-1 shuttles electrons from NADH, via FMN and iron-sulfur (Fe-S) centers, to quinones in the respiratory chain. The immediate electron acceptor for the enzyme in this species is believed to be a menaquinone. Couples the redox reaction to proton translocation (for every two electrons transferred, four hydrogen ions are translocated across the cytoplasmic membrane), and thus conserves the redox energy in a proton gradient. The sequence is that of NADH-quinone oxidoreductase subunit C from Salinispora tropica (strain ATCC BAA-916 / DSM 44818 / JCM 13857 / NBRC 105044 / CNB-440).